Reading from the N-terminus, the 64-residue chain is Cecropin-A (64 aa).

The first 22 residues, 1–22 (MNFSRIFFFVFACLTALAMVNA), serve as a signal peptide directing secretion. The propeptide at 23 to 26 (APEP) is removed by a dipeptidylpeptidase. A Lysine amide modification is found at lysine 63.

Belongs to the cecropin family. A protein with the same sequence as cecropin A, but lacking the carboxyl blocking group, has been isolated and called cecropin C.

It is found in the secreted. Functionally, cecropins have lytic and antibacterial activity against several Gram-positive and Gram-negative bacteria. This chain is Cecropin-A, found in Hyalophora cecropia (Cecropia moth).